The primary structure comprises 253 residues: Uracil-DNA glycosylase (253 aa).

D79 (proton acceptor) is an active-site residue.

Belongs to the uracil-DNA glycosylase (UDG) superfamily. UNG family.

The protein localises to the cytoplasm. It catalyses the reaction Hydrolyzes single-stranded DNA or mismatched double-stranded DNA and polynucleotides, releasing free uracil.. In terms of biological role, excises uracil residues from the DNA which can arise as a result of misincorporation of dUMP residues by DNA polymerase or due to deamination of cytosine. This is Uracil-DNA glycosylase from Xylella fastidiosa (strain M23).